The sequence spans 133 residues: Small ribosomal subunit protein uS9 (133 aa).

Basic and acidic residues predominate over residues 102 to 113; that stretch reads KVEGYLSRDPRA. The segment at 102-133 is disordered; that stretch reads KVEGYLSRDPRAKERRKYGLKKARKAPQFSKR. Over residues 114–133 the composition is skewed to basic residues; it reads KERRKYGLKKARKAPQFSKR.

Belongs to the universal ribosomal protein uS9 family.

The protein is Small ribosomal subunit protein uS9 of Gloeobacter violaceus (strain ATCC 29082 / PCC 7421).